The sequence spans 467 residues: Glutamate--tRNA ligase 2 (467 aa).

The 'HIGH' region signature appears at 18–28; that stretch reads PSPTGYLHVGG. Positions 238-242 match the 'KMSKS' region motif; that stretch reads PLSKR. Lys-241 contributes to the ATP binding site.

Belongs to the class-I aminoacyl-tRNA synthetase family. Glutamate--tRNA ligase type 1 subfamily. As to quaternary structure, monomer.

It is found in the cytoplasm. The catalysed reaction is tRNA(Glu) + L-glutamate + ATP = L-glutamyl-tRNA(Glu) + AMP + diphosphate. Its function is as follows. Catalyzes the attachment of glutamate to tRNA(Glu) in a two-step reaction: glutamate is first activated by ATP to form Glu-AMP and then transferred to the acceptor end of tRNA(Glu). This Fervidobacterium nodosum (strain ATCC 35602 / DSM 5306 / Rt17-B1) protein is Glutamate--tRNA ligase 2.